Consider the following 388-residue polypeptide: Flap endonuclease 1 (388 aa).

The N-domain stretch occupies residues 1-104 (MGILGLSKLI…GELAKRAERR (104 aa)). Asp-34 is a Mg(2+) binding site. 2 residues coordinate DNA: Arg-47 and Arg-70. Residues Asp-86, Glu-158, Glu-160, Asp-179, and Asp-181 each coordinate Mg(2+). The interval 122 to 253 (QIEKFNRRLV…KRAIELIKSY (132 aa)) is I-domain. Glu-158 serves as a coordination point for DNA. DNA contacts are provided by Gly-231 and Asp-233. Asp-233 serves as a coordination point for Mg(2+). Residues 336–344 (TQVRLDSFF) form an interaction with PCNA region. Residues 355–388 (AAAKRKAEESKKSANSKKAKIGGGSGAGRGRRPK) are disordered.

It belongs to the XPG/RAD2 endonuclease family. FEN1 subfamily. Interacts with PCNA. Three molecules of FEN1 bind to one PCNA trimer with each molecule binding to one PCNA monomer. PCNA stimulates the nuclease activity without altering cleavage specificity. The cofactor is Mg(2+). Phosphorylated. Phosphorylation upon DNA damage induces relocalization to the nuclear plasma.

It is found in the nucleus. The protein localises to the nucleolus. The protein resides in the nucleoplasm. Its subcellular location is the mitochondrion. Structure-specific nuclease with 5'-flap endonuclease and 5'-3' exonuclease activities involved in DNA replication and repair. During DNA replication, cleaves the 5'-overhanging flap structure that is generated by displacement synthesis when DNA polymerase encounters the 5'-end of a downstream Okazaki fragment. It enters the flap from the 5'-end and then tracks to cleave the flap base, leaving a nick for ligation. Also involved in the long patch base excision repair (LP-BER) pathway, by cleaving within the apurinic/apyrimidinic (AP) site-terminated flap. Acts as a genome stabilization factor that prevents flaps from equilibrating into structures that lead to duplications and deletions. Also possesses 5'-3' exonuclease activity on nicked or gapped double-stranded DNA, and exhibits RNase H activity. Also involved in replication and repair of rDNA and in repairing mitochondrial DNA. The sequence is that of Flap endonuclease 1 from Drosophila grimshawi (Hawaiian fruit fly).